Consider the following 35-residue polypeptide: Photosystem II reaction center protein T (35 aa).

Residues 3–23 form a helical membrane-spanning segment; it reads AFAYTLLMTLVVATLFFAVAF.

It belongs to the PsbT family. PSII is composed of 1 copy each of membrane proteins PsbA, PsbB, PsbC, PsbD, PsbE, PsbF, PsbH, PsbI, PsbJ, PsbK, PsbL, PsbM, PsbT, PsbX, PsbY, Psb30/Ycf12, peripheral proteins PsbO, CyanoQ (PsbQ), PsbU, PsbV and a large number of cofactors. It forms dimeric complexes.

The protein resides in the cellular thylakoid membrane. Found at the monomer-monomer interface of the photosystem II (PS II) dimer, plays a role in assembly and dimerization of PSII. PSII is a light-driven water plastoquinone oxidoreductase, using light energy to abstract electrons from H(2)O, generating a proton gradient subsequently used for ATP formation. This is Photosystem II reaction center protein T from Prochlorococcus marinus (strain MIT 9303).